The primary structure comprises 239 residues: Ribose-5-phosphate isomerase A (239 aa).

Substrate contacts are provided by residues 40-43 (SGST), 96-99 (DGAD), and 110-113 (KGGG). The Proton acceptor role is filled by glutamate 119. Lysine 137 contacts substrate.

This sequence belongs to the ribose 5-phosphate isomerase family. As to quaternary structure, homodimer.

It carries out the reaction aldehydo-D-ribose 5-phosphate = D-ribulose 5-phosphate. The protein operates within carbohydrate degradation; pentose phosphate pathway; D-ribose 5-phosphate from D-ribulose 5-phosphate (non-oxidative stage): step 1/1. In terms of biological role, catalyzes the reversible conversion of ribose-5-phosphate to ribulose 5-phosphate. This Methanococcus vannielii (strain ATCC 35089 / DSM 1224 / JCM 13029 / OCM 148 / SB) protein is Ribose-5-phosphate isomerase A.